The primary structure comprises 392 residues: Na(+)/H(+) antiporter NhaA (392 aa).

Helical transmembrane passes span 14 to 34, 59 to 79, 95 to 115, 125 to 145, 154 to 174, 179 to 199, 213 to 233, 254 to 274, 287 to 307, 328 to 348, and 363 to 383; these read AGGL…NSPL, LLLW…GLEV, IFPA…YLLF, GWAI…ALLG, VFLL…IALF, VSLQ…YMNW, LVLW…GVIV, GLHP…NAGV, LLPL…IFLF, IFAV…IASL, and LGIL…LRLA.

It belongs to the NhaA Na(+)/H(+) (TC 2.A.33) antiporter family.

It is found in the cell inner membrane. The catalysed reaction is Na(+)(in) + 2 H(+)(out) = Na(+)(out) + 2 H(+)(in). Its function is as follows. Na(+)/H(+) antiporter that extrudes sodium in exchange for external protons. The sequence is that of Na(+)/H(+) antiporter NhaA from Yersinia enterocolitica serotype O:8 / biotype 1B (strain NCTC 13174 / 8081).